A 409-amino-acid polypeptide reads, in one-letter code: 1-deoxy-D-xylulose 5-phosphate reductoisomerase (409 aa).

NADPH contacts are provided by threonine 5, glycine 6, serine 7, isoleucine 8, glycine 31, asparagine 33, and asparagine 122. Lysine 123 contributes to the 1-deoxy-D-xylulose 5-phosphate binding site. Residue glutamate 124 participates in NADPH binding. Aspartate 148 is a binding site for Mn(2+). 1-deoxy-D-xylulose 5-phosphate-binding residues include serine 149, glutamate 150, serine 186, and histidine 209. Mn(2+) is bound at residue glutamate 150. Glycine 215 lines the NADPH pocket. 1-deoxy-D-xylulose 5-phosphate contacts are provided by serine 222, asparagine 227, lysine 228, and glutamate 231. A Mn(2+)-binding site is contributed by glutamate 231.

This sequence belongs to the DXR family. Mg(2+) is required as a cofactor. Mn(2+) serves as cofactor.

The enzyme catalyses 2-C-methyl-D-erythritol 4-phosphate + NADP(+) = 1-deoxy-D-xylulose 5-phosphate + NADPH + H(+). It participates in isoprenoid biosynthesis; isopentenyl diphosphate biosynthesis via DXP pathway; isopentenyl diphosphate from 1-deoxy-D-xylulose 5-phosphate: step 1/6. Its function is as follows. Catalyzes the NADPH-dependent rearrangement and reduction of 1-deoxy-D-xylulose-5-phosphate (DXP) to 2-C-methyl-D-erythritol 4-phosphate (MEP). The chain is 1-deoxy-D-xylulose 5-phosphate reductoisomerase from Parasynechococcus marenigrum (strain WH8102).